The sequence spans 367 residues: Peptide chain release factor 1 (367 aa).

Glutamine 243 carries the post-translational modification N5-methylglutamine.

It belongs to the prokaryotic/mitochondrial release factor family. Post-translationally, methylated by PrmC. Methylation increases the termination efficiency of RF1.

The protein localises to the cytoplasm. Its function is as follows. Peptide chain release factor 1 directs the termination of translation in response to the peptide chain termination codons UAG and UAA. This chain is Peptide chain release factor 1, found in Acidovorax ebreus (strain TPSY) (Diaphorobacter sp. (strain TPSY)).